Consider the following 196-residue polypeptide: Crossover junction endodeoxyribonuclease RuvC (196 aa).

Catalysis depends on residues Asp23, Glu83, and His156. Mg(2+) is bound by residues Asp23, Glu83, and His156.

The protein belongs to the RuvC family. As to quaternary structure, homodimer which binds Holliday junction (HJ) DNA. The HJ becomes 2-fold symmetrical on binding to RuvC with unstacked arms; it has a different conformation from HJ DNA in complex with RuvA. In the full resolvosome a probable DNA-RuvA(4)-RuvB(12)-RuvC(2) complex forms which resolves the HJ. Mg(2+) serves as cofactor.

The protein resides in the cytoplasm. It catalyses the reaction Endonucleolytic cleavage at a junction such as a reciprocal single-stranded crossover between two homologous DNA duplexes (Holliday junction).. In terms of biological role, the RuvA-RuvB-RuvC complex processes Holliday junction (HJ) DNA during genetic recombination and DNA repair. Endonuclease that resolves HJ intermediates. Cleaves cruciform DNA by making single-stranded nicks across the HJ at symmetrical positions within the homologous arms, yielding a 5'-phosphate and a 3'-hydroxyl group; requires a central core of homology in the junction. The consensus cleavage sequence is 5'-(A/T)TT(C/G)-3'. Cleavage occurs on the 3'-side of the TT dinucleotide at the point of strand exchange. HJ branch migration catalyzed by RuvA-RuvB allows RuvC to scan DNA until it finds its consensus sequence, where it cleaves and resolves the cruciform DNA. The sequence is that of Crossover junction endodeoxyribonuclease RuvC from Treponema pallidum (strain Nichols).